We begin with the raw amino-acid sequence, 209 residues long: Ribonuclease HII (209 aa).

Residues 7 to 198 (GPVAGVDEAG…VAKAHQEWLH (192 aa)) enclose the RNase H type-2 domain. The a divalent metal cation site is built by aspartate 13, glutamate 14, and aspartate 107.

Belongs to the RNase HII family. Mn(2+) is required as a cofactor. The cofactor is Mg(2+).

The protein resides in the cytoplasm. The enzyme catalyses Endonucleolytic cleavage to 5'-phosphomonoester.. In terms of biological role, endonuclease that specifically degrades the RNA of RNA-DNA hybrids. The chain is Ribonuclease HII from Corynebacterium glutamicum (strain ATCC 13032 / DSM 20300 / JCM 1318 / BCRC 11384 / CCUG 27702 / LMG 3730 / NBRC 12168 / NCIMB 10025 / NRRL B-2784 / 534).